Consider the following 88-residue polypeptide: Cytochrome c oxidase subunit 6B2 (88 aa).

Residues T29 to W75 form the CHCH domain. The Cx9C motif signature appears at C32–C42. Cystine bridges form between C32/C67 and C42/C56. Residues C56–C67 carry the Cx10C motif motif.

This sequence belongs to the cytochrome c oxidase subunit 6B family. In terms of assembly, component of the cytochrome c oxidase (complex IV, CIV), a multisubunit enzyme composed of 14 subunits. The complex is composed of a catalytic core of 3 subunits MT-CO1, MT-CO2 and MT-CO3, encoded in the mitochondrial DNA, and 11 supernumerary subunits COX4I1 (or COX4I2), COX5A, COX5B, COX6A2 (or COX6A1), COX6B1 (or COX6B2), COX6C, COX7A1 (or COX7A2), COX7B, COX7C, COX8B and NDUFA4, which are encoded in the nuclear genome. The complex exists as a monomer or a dimer and forms supercomplexes (SCs) in the inner mitochondrial membrane with NADH-ubiquinone oxidoreductase (complex I, CI) and ubiquinol-cytochrome c oxidoreductase (cytochrome b-c1 complex, complex III, CIII), resulting in different assemblies (supercomplex SCI(1)III(2)IV(1) and megacomplex MCI(2)III(2)IV(2)). Testis specific.

It is found in the mitochondrion inner membrane. Its pathway is energy metabolism; oxidative phosphorylation. In terms of biological role, component of the cytochrome c oxidase, the last enzyme in the mitochondrial electron transport chain which drives oxidative phosphorylation. The respiratory chain contains 3 multisubunit complexes succinate dehydrogenase (complex II, CII), ubiquinol-cytochrome c oxidoreductase (cytochrome b-c1 complex, complex III, CIII) and cytochrome c oxidase (complex IV, CIV), that cooperate to transfer electrons derived from NADH and succinate to molecular oxygen, creating an electrochemical gradient over the inner membrane that drives transmembrane transport and the ATP synthase. Cytochrome c oxidase is the component of the respiratory chain that catalyzes the reduction of oxygen to water. Electrons originating from reduced cytochrome c in the intermembrane space (IMS) are transferred via the dinuclear copper A center (CU(A)) of subunit 2 and heme A of subunit 1 to the active site in subunit 1, a binuclear center (BNC) formed by heme A3 and copper B (CU(B)). The BNC reduces molecular oxygen to 2 water molecules using 4 electrons from cytochrome c in the IMS and 4 protons from the mitochondrial matrix. In Bos taurus (Bovine), this protein is Cytochrome c oxidase subunit 6B2 (COX6B2).